The primary structure comprises 61 residues: MKFSKIFVFVFAIVFATASVSAAPGNFFKDLEKMGQRVRDAVISAAPAVDTLAKAKALGQG.

The signal sequence occupies residues 1-22 (MKFSKIFVFVFAIVFATASVSA). The propeptide at 23–24 (AP) is removed by a dipeptidylpeptidase. The residue at position 60 (glutamine 60) is a Glutamine amide.

It belongs to the cecropin family. Mainly in fat body. Lower in hemocytes. Not expressed in midguts, malpighian tubules and silk glands.

It localises to the secreted. Cecropins have lytic and antibacterial activity against several Gram-positive and Gram-negative bacteria. This is Cecropin-D (CECD) from Bombyx mori (Silk moth).